Here is a 516-residue protein sequence, read N- to C-terminus: MSNKPIADMIETIEHFAQTQPSYPVYNVLGQEHTYGDLKADSDSLAAVIDQLGLPEKSPVVVFGGQEYEMLATFVALTKSGHAYIPIDSHSALERVSAILEVAEPSLIIAISAFPLEQVSTPMINLAQVQEAFAQGNNYEITHPVKGDDNYYIIFTSGTTGKPKGVQISHDNLLSFTNWMITDKEFATPSRPQMLAQPPYSFDLSVMYWAPTLALGGTLFTLPSVITQDFKQLFAAIFSLPIAIWTSTPSFADMAMLSEYFNSEKMPGITHFYFDGEELTVKTAQKLRERFPNARIINAYGPTEATVALSAVAVTDEMLATLKRLPIGYTKADSPTFIIDEEGNKLPNGEQGEIIVSGPAVSKGYMKNPEKTAEAFFEFEGLPAYHTGDVGTMTDEGLLLYGGRMDFQIKFNGYRIELEDVSQNLNKSRFIESAVAVPRYNKDHKVQNLLAYVILKDGVREQFERDIDITKAIKEDLTDIMMSYMMPSKFLYRDSLPLTPNGKIDIKGLINEVNKR.

156-157 (TS) is an ATP binding site. D203 is a binding site for D-alanine. 298–303 (NAYGPT) provides a ligand contact to ATP. D-alanine is bound at residue V307. Residues D389, 401–404 (YGGR), and K503 each bind ATP. K503 is a D-alanine binding site.

It belongs to the ATP-dependent AMP-binding enzyme family. DltA subfamily.

Its subcellular location is the cytoplasm. It carries out the reaction holo-[D-alanyl-carrier protein] + D-alanine + ATP = D-alanyl-[D-alanyl-carrier protein] + AMP + diphosphate. The protein operates within cell wall biogenesis; lipoteichoic acid biosynthesis. Catalyzes the first step in the D-alanylation of lipoteichoic acid (LTA), the activation of D-alanine and its transfer onto the D-alanyl carrier protein (Dcp) DltC. In an ATP-dependent two-step reaction, forms a high energy D-alanyl-AMP intermediate, followed by transfer of the D-alanyl residue as a thiol ester to the phosphopantheinyl prosthetic group of the Dcp. D-alanylation of LTA plays an important role in modulating the properties of the cell wall in Gram-positive bacteria, influencing the net charge of the cell wall. This is D-alanine--D-alanyl carrier protein ligase from Streptococcus pneumoniae (strain ATCC 700669 / Spain 23F-1).